Reading from the N-terminus, the 481-residue chain is MSTICPPPSPAVAKTEIALSGESPLLAATFAYWDNILGPRVRHIWAPKTDQVLLSDGEITFLANHTLNGEILRNAESGAIDVKFFVLSEKGVIIVSLIFDGNWNGDRSTYGLSIILPQTELSFYLPLHRVCVDRLTHIIRKGRIWMHKERQENVQKIVLEGTERMEDQGQSIIPMLTGEVIPVMELLASMKSHSVPEDIDIADTVLNDDDIGDSCHEGFLLNAISSHLQTCGCSVVVGSSAEKVNKIVRTLCLFLTPAERKCSRLCEAESSFKYESGLFVQGLLKDATGSFVLPFRQVMYAPYPTTHIDVDVNTVKQMPPCHEHIYNQRRYMRSELTAFWRATSEEDMAQDTIIYTDESFTPDLNIFQDVLHRDTLVKAFLDQVFHLKPGLSLRSTFLAQFLLILHRKALTLIKYIEDDTQKGKKPFKSLRNLKIDLDLTAEGDLNIIMALAEKIKPGLHSFIFGRPFYTSVQERDVLMTF.

The region spanning 23-194 (SPLLAATFAY…ELLASMKSHS (172 aa)) is the uDENN C9ORF72-type domain. Residues 200–343 (DIADTVLNDD…SELTAFWRAT (144 aa)) form the cDENN C9ORF72-type domain. The region spanning 370-464 (VLHRDTLVKA…IKPGLHSFIF (95 aa)) is the dDENN C9ORF72-type domain. A required for the homodimerization of the C9orf72-SMCR8 complex region spans residues 461–481 (SFIFGRPFYTSVQERDVLMTF).

As to quaternary structure, component of the C9orf72-SMCR8 complex, at least composed of C9orf72, SMCR8 and WDR41. The complex is formed of two protomers, each individually consisting of one molecule each of C9orf72, SMCR8 and WDR41. The protomers homodimerize via an interaction between C9orf72 (via C-terminus) and SMCR8 (via N-terminus). Within each protomer SMCR8 (via DENN domain) acts as a bridging protein between WDR41 (via C-terminus and N-terminus) and C9orf72 (via C-terminus). The C9orf72-SMCR8 complex associates with the ULK1/ATG1 kinase complex. Interacts with ULK1/ATG1 kinase complex members ULK1, ATG13 and RB1CC1. Interacts with SMCR8; the interaction is direct. Interacts with HNRNPA1, HNRNPA2B1 and UBQLN2. Interacts with small Rab GTPase RAB1A; the interaction mediates recruitment of RAB1A to the ULK1/ATG1 kinase complex. Also interacts with small Rab GTPase RAB7A. Interacts with cofilin. Interacts with GTP-binding proteins ARF1 and ARF6. Interacts with the DLG4/PSD-95. Interacts with CARM1 (via PH domain-like fold). Interacts with RAB39A and RAB39B (in GDP-bound forms); functions as GEF for RAB39A and RAB39B. As to expression, expressed in postnatal cerebellum and cortex (at protein level). Neuronal expression is detected in several regions of the adult brain and spinal cord. Prominent expression also observed in embryonic and early postnatal neurons including retinal ganglion cells, sensory neurons in the olfactory epithelium and in dorsal root ganglia, and spinal motor neurons. Expressed in the developing cerebral cortex, cerebellum, olfactory bulb, hippocampus and spinal cord in the embryo and in P0 cortical neurons and astrocytes. Also expressed in non-neuronal tissues such as kidney and tooth. In the spleen, highly expressed in myeloid cells compared to B cell and T cell populations where expression is much lower. In the brain, highly expressed in microglia. In terms of tissue distribution, expressed in the forebrain, including in the glomerular layer of the olfactory bulb (at protein level).

Its subcellular location is the nucleus. It is found in the cytoplasm. The protein resides in the P-body. The protein localises to the stress granule. It localises to the endosome. Its subcellular location is the lysosome. It is found in the cytoplasmic vesicle. The protein resides in the autophagosome. The protein localises to the autolysosome. It localises to the secreted. Its subcellular location is the cell projection. It is found in the axon. The protein resides in the growth cone. The protein localises to the perikaryon. It localises to the dendrite. Its subcellular location is the presynapse. It is found in the postsynapse. Functionally, acts as a guanine-nucleotide releasing factor (GEF) for Rab GTPases by promoting the conversion of inactive RAB-GDP to the active form RAB-GTP. Acts as a GEF for RAB39A which enables HOPS-mediated autophagosome-lysosome membrane tethering and fusion in mammalian autophagy. Component of the C9orf72-SMCR8 complex where both subunits display GEF activity and that regulates autophagy. As part of the C9orf72-SMCR8-WDR41 (CSW) complex, functions as GEF for RAB8A, and RAB39B, thereby promoting autophagosome maturation. As part of the C9orf72-SMCR8 complex, also functions as GTPase activating protein (GAP) for RAB8A and RAB11A in vitro. The C9orf72-SMCR8 complex also acts as a regulator of autophagy initiation by interacting with the ULK1/ATG1 kinase complex and modulating its protein kinase activity. Promotes initiation of autophagy by regulating the RAB1A-dependent trafficking of the ULK1/ATG1 kinase complex to the phagophore which leads to autophagosome formation. Acts as a regulator of mTORC1 signaling by promoting phosphorylation of mTORC1 substrates. Plays a role in endosomal trafficking. May be involved in regulating the maturation of phagosomes to lysosomes. Promotes the lysosomal localization and lysosome-mediated degradation of CARM1 which leads to inhibition of starvation-induced lipid metabolism. Regulates actin dynamics in motor neurons by inhibiting the GTP-binding activity of ARF6, leading to ARF6 inactivation. This reduces the activity of the LIMK1 and LIMK2 kinases which are responsible for phosphorylation and inactivation of CFL1/cofilin, leading to cofilin activation. Positively regulates axon extension and axon growth cone size in spinal motor neurons. Required for SMCR8 protein expression and localization at pre- and post-synaptic compartments in the forebrain, also regulates protein abundance of RAB3A and GRIA1/GLUR1 in post-synaptic compartments in the forebrain and hippocampus. Plays a role within the hematopoietic system in restricting inflammation and the development of autoimmunity. The protein is Guanine nucleotide exchange factor C9orf72 homolog of Mus musculus (Mouse).